The primary structure comprises 127 residues: Putative B3 domain-containing protein At4g12617 (127 aa).

Residues 35 to 127 (IMMPKTLLEA…HTRLNFKHVA (93 aa)) constitute a DNA-binding region (TF-B3).

The protein resides in the nucleus. In Arabidopsis thaliana (Mouse-ear cress), this protein is Putative B3 domain-containing protein At4g12617.